A 357-amino-acid chain; its full sequence is Chorismate synthase (357 aa).

Arginine 47 lines the NADP(+) pocket. FMN contacts are provided by residues 123 to 125, glycine 281, 296 to 300, and arginine 324; these read RSS and KPTSS.

It belongs to the chorismate synthase family. As to quaternary structure, homotetramer. The cofactor is FMNH2.

The catalysed reaction is 5-O-(1-carboxyvinyl)-3-phosphoshikimate = chorismate + phosphate. Its pathway is metabolic intermediate biosynthesis; chorismate biosynthesis; chorismate from D-erythrose 4-phosphate and phosphoenolpyruvate: step 7/7. Functionally, catalyzes the anti-1,4-elimination of the C-3 phosphate and the C-6 proR hydrogen from 5-enolpyruvylshikimate-3-phosphate (EPSP) to yield chorismate, which is the branch point compound that serves as the starting substrate for the three terminal pathways of aromatic amino acid biosynthesis. This reaction introduces a second double bond into the aromatic ring system. In Chlamydia muridarum (strain MoPn / Nigg), this protein is Chorismate synthase.